Reading from the N-terminus, the 153-residue chain is Histone H2B type W-T (153 aa).

The interval 1-54 (MATASAMAGPSSETTSEEQLITQEPKEANSTTSQKQSKQRKRGRHGPRRCHSNC) is disordered. The span at 11–36 (SSETTSEEQLITQEPKEANSTTSQKQ) shows a compositional bias: polar residues. Over residues 37-52 (SKQRKRGRHGPRRCHS) the composition is skewed to basic residues.

It belongs to the histone H2B family. Can replace the conventional histone H2B in the nucleosome. The nucleosome is a histone octamer containing two molecules each of H2A, H2B, H3 and H4 assembled in one H3-H4 heterotetramer and two H2A-H2B heterodimers. The octamer wraps approximately 147 bp of DNA. As to expression, testis-specific (at protein level).

The protein resides in the nucleus membrane. It localises to the chromosome. Its subcellular location is the telomere. In terms of biological role, atypical histone H2B that can form nucleosomes structurally and dynamically indistinguishable from those containing conventional H2B. Nucleosomes wrap and compact DNA into chromatin, limiting DNA accessibility to the cellular machineries which require DNA as a template. Histones thereby play a central role in transcription regulation, DNA repair, DNA replication and chromosomal stability. DNA accessibility is regulated via a complex set of post-translational modifications of histones, also called histone code, and nucleosome remodeling. However, unlike conventional H2B, does not recruit chromosome condensation factors and does not participate in the assembly of mitotic chromosomes. May be important for telomere function and play a role in spermatogenesis. This chain is Histone H2B type W-T, found in Homo sapiens (Human).